The sequence spans 630 residues: 1-deoxy-D-xylulose-5-phosphate synthase (630 aa).

Thiamine diphosphate is bound by residues histidine 80 and 121–123 (GHS). Aspartate 152 lines the Mg(2+) pocket. Thiamine diphosphate is bound by residues 153-154 (GA), asparagine 181, tyrosine 288, and glutamate 370. Asparagine 181 contributes to the Mg(2+) binding site.

It belongs to the transketolase family. DXPS subfamily. As to quaternary structure, homodimer. Requires Mg(2+) as cofactor. Thiamine diphosphate serves as cofactor.

The enzyme catalyses D-glyceraldehyde 3-phosphate + pyruvate + H(+) = 1-deoxy-D-xylulose 5-phosphate + CO2. It participates in metabolic intermediate biosynthesis; 1-deoxy-D-xylulose 5-phosphate biosynthesis; 1-deoxy-D-xylulose 5-phosphate from D-glyceraldehyde 3-phosphate and pyruvate: step 1/1. Functionally, catalyzes the acyloin condensation reaction between C atoms 2 and 3 of pyruvate and glyceraldehyde 3-phosphate to yield 1-deoxy-D-xylulose-5-phosphate (DXP). The protein is 1-deoxy-D-xylulose-5-phosphate synthase of Colwellia psychrerythraea (strain 34H / ATCC BAA-681) (Vibrio psychroerythus).